The chain runs to 294 residues: tRNA dimethylallyltransferase (294 aa).

10-17 contributes to the ATP binding site; sequence GPTAVGKT. Residue 12 to 17 coordinates substrate; that stretch reads TAVGKT. The tract at residues 35 to 38 is interaction with substrate tRNA; the sequence is DSQQ.

This sequence belongs to the IPP transferase family. Monomer. Mg(2+) is required as a cofactor.

It catalyses the reaction adenosine(37) in tRNA + dimethylallyl diphosphate = N(6)-dimethylallyladenosine(37) in tRNA + diphosphate. Catalyzes the transfer of a dimethylallyl group onto the adenine at position 37 in tRNAs that read codons beginning with uridine, leading to the formation of N6-(dimethylallyl)adenosine (i(6)A). This Streptococcus pneumoniae (strain P1031) protein is tRNA dimethylallyltransferase.